Here is a 409-residue protein sequence, read N- to C-terminus: Na(+)-translocating NADH-quinone reductase subunit F (409 aa).

A helical transmembrane segment spans residues 5–25; it reads FIFGIGAFTAIVLVLAVVILI. Residues 34-128 form the 2Fe-2S ferredoxin-type domain; sequence GDITISINND…SMDVELPEEV (95 aa). Residues cysteine 71, cysteine 77, cysteine 80, and cysteine 112 each coordinate [2Fe-2S] cluster. The FAD-binding FR-type domain maps to 131-271; it reads VKKWECTVIS…SGPFGEFFAK (141 aa).

Belongs to the NqrF family. As to quaternary structure, composed of six subunits; NqrA, NqrB, NqrC, NqrD, NqrE and NqrF. Requires [2Fe-2S] cluster as cofactor. The cofactor is FAD.

Its subcellular location is the cell inner membrane. It carries out the reaction a ubiquinone + n Na(+)(in) + NADH + H(+) = a ubiquinol + n Na(+)(out) + NAD(+). NQR complex catalyzes the reduction of ubiquinone-1 to ubiquinol by two successive reactions, coupled with the transport of Na(+) ions from the cytoplasm to the periplasm. The first step is catalyzed by NqrF, which accepts electrons from NADH and reduces ubiquinone-1 to ubisemiquinone by a one-electron transfer pathway. The sequence is that of Na(+)-translocating NADH-quinone reductase subunit F from Mannheimia succiniciproducens (strain KCTC 0769BP / MBEL55E).